We begin with the raw amino-acid sequence, 270 residues long: MLLGSVPQLDRVAVQLGPFPVYWYGIIIGTGVLLGLWLATREGERLGIPKDTFVDLVLIAVPIAILFARMYYVIFEWEYYVQNPSQIINIRQGGLAIHGGLIGAVITGILFAKRRGVSFWKLADIAAPSILLGQAIGRWGNFMNQEAHGDEVTRQFLEGLHLPDFIINQMYIDGVYYHPTFLYESLWNFAGVILLLALRKVNLRRGELFFTYLIWYSIGRFFVEGLRTDSLMLGPLRIAQVMSIGLVVISIIFIIVRRKMGQADKRYSEN.

The next 4 membrane-spanning stretches (helical) occupy residues 19 to 39 (FPVY…LWLA), 56 to 76 (LVLI…VIFE), 92 to 112 (QGGL…ILFA), and 116 to 136 (GVSF…GQAI). Arg138 is a binding site for a 1,2-diacyl-sn-glycero-3-phospho-(1'-sn-glycerol). A run of 3 helical transmembrane segments spans residues 178–198 (HPTF…LLAL), 206–226 (GELF…VEGL), and 236–256 (LRIA…FIIV).

The protein belongs to the Lgt family.

It is found in the cell membrane. The catalysed reaction is L-cysteinyl-[prolipoprotein] + a 1,2-diacyl-sn-glycero-3-phospho-(1'-sn-glycerol) = an S-1,2-diacyl-sn-glyceryl-L-cysteinyl-[prolipoprotein] + sn-glycerol 1-phosphate + H(+). The protein operates within protein modification; lipoprotein biosynthesis (diacylglyceryl transfer). Functionally, catalyzes the transfer of the diacylglyceryl group from phosphatidylglycerol to the sulfhydryl group of the N-terminal cysteine of a prolipoprotein, the first step in the formation of mature lipoproteins. This Bacillus thuringiensis subsp. konkukian (strain 97-27) protein is Phosphatidylglycerol--prolipoprotein diacylglyceryl transferase.